A 129-amino-acid chain; its full sequence is Glycine cleavage system H protein (129 aa).

The 83-residue stretch at 24 to 106 (SVVVGVTQHA…YGAGWIVEIE (83 aa)) folds into the Lipoyl-binding domain. Lys65 bears the N6-lipoyllysine mark.

The protein belongs to the GcvH family. In terms of assembly, the glycine cleavage system is composed of four proteins: P, T, L and H. It depends on (R)-lipoate as a cofactor.

Functionally, the glycine cleavage system catalyzes the degradation of glycine. The H protein shuttles the methylamine group of glycine from the P protein to the T protein. This is Glycine cleavage system H protein from Myxococcus xanthus (strain DK1622).